The chain runs to 238 residues: uncharacterized protein (238 aa).

Residues 1 to 19 (MKINLFFVFLFELLHFVAA) form the signal peptide. Topologically, residues 20–197 (YSCEGDESAA…LALYGHLSQK (178 aa)) are lumenal. A helical transmembrane segment spans residues 198-216 (YTPLGMNVAIFGISAYIMY). The Cytoplasmic segment spans residues 217–238 (RSSKKAKQKQAAAAAAAAAKKK).

The protein localises to the endoplasmic reticulum membrane. This is an uncharacterized protein from Schizosaccharomyces pombe (strain 972 / ATCC 24843) (Fission yeast).